The sequence spans 287 residues: Cyclopropane mycolic acid synthase MmaA2 (287 aa).

Residues Tyr33–Ser34, Gly72–Gly74, Thr94–Gln99, Trp123–Glu124, and Ile136 each bind S-adenosyl-L-methionine. Cys269 is an active-site residue.

Belongs to the CFA/CMAS family.

It carries out the reaction a 1-acyl-2-(9Z)-enoyl-sn-glycero-3-phospholipid + S-adenosyl-L-methionine = a 1-acyl-2-(9-cyclopronane)-acyl-sn-glycero-3-phospholipid + S-adenosyl-L-homocysteine + H(+). Its pathway is lipid metabolism; mycolic acid biosynthesis. Its function is as follows. Catalyzes the conversion of a double bond to a cis cyclopropane ring at the distal position of an alpha mycolic acid via the transfer of a methylene group from S-adenosyl-L-methionine. MmaA2 also catalyzes the biosynthesis of the cis-cyclopropanated methoxymycolates. Cyclopropanated mycolic acids are key factors participating in cell envelope permeability, host immunomodulation and persistence. In Mycobacterium bovis (strain ATCC BAA-935 / AF2122/97), this protein is Cyclopropane mycolic acid synthase MmaA2 (cmaC).